We begin with the raw amino-acid sequence, 198 residues long: 3-isopropylmalate dehydratase small subunit (198 aa).

The protein belongs to the LeuD family. LeuD type 1 subfamily. As to quaternary structure, heterodimer of LeuC and LeuD.

It carries out the reaction (2R,3S)-3-isopropylmalate = (2S)-2-isopropylmalate. It participates in amino-acid biosynthesis; L-leucine biosynthesis; L-leucine from 3-methyl-2-oxobutanoate: step 2/4. In terms of biological role, catalyzes the isomerization between 2-isopropylmalate and 3-isopropylmalate, via the formation of 2-isopropylmaleate. The polypeptide is 3-isopropylmalate dehydratase small subunit (Corynebacterium jeikeium (strain K411)).